The chain runs to 563 residues: Arginine--tRNA ligase (563 aa).

The 'HIGH' region motif lies at 120 to 130 (PNIAKPFHIGH).

Belongs to the class-I aminoacyl-tRNA synthetase family. In terms of assembly, monomer.

It is found in the cytoplasm. It catalyses the reaction tRNA(Arg) + L-arginine + ATP = L-arginyl-tRNA(Arg) + AMP + diphosphate. The polypeptide is Arginine--tRNA ligase (Clostridium botulinum (strain Langeland / NCTC 10281 / Type F)).